Consider the following 1380-residue polypeptide: Carboxypeptidase D (1380 aa).

Positions Met-1–Ala-31 are cleaved as a signal peptide. Residues Ala-32–Glu-1299 lie on the Extracellular side of the membrane. One can recognise a Peptidase M14 1 domain in the interval Arg-57 to Val-380. 2 residues coordinate Zn(2+): His-139 and Glu-142. The short motif at Arg-162–Asp-164 is the Cell attachment site element. N-linked (GlcNAc...) asparagine glycosylation is present at Asn-172. The segment at Ala-190–Leu-232 is disordered. Over residues Cys-195–Gly-204 the composition is skewed to gly residues. A glycan (N-linked (GlcNAc...) asparagine) is linked at Asn-217. Zn(2+) is bound at residue His-257. Phosphotyrosine is present on Tyr-265. Ser-270 carries the post-translational modification Phosphoserine. Catalysis depends on Glu-350, which acts as the Proton donor/acceptor. Asn-399, Asn-410, Asn-429, and Asn-522 each carry an N-linked (GlcNAc...) asparagine glycan. A Peptidase M14 2 domain is found at His-502 to Val-792. Zn(2+)-binding residues include His-564 and Glu-567. Asn-626 is a glycosylation site (N-linked (GlcNAc...) asparagine). His-671 serves as a coordination point for Zn(2+). Catalysis depends on Glu-762, which acts as the Proton donor/acceptor. Residues Asn-811, Asn-855, Asn-867, and Asn-879 are each glycosylated (N-linked (GlcNAc...) asparagine). A disordered region spans residues Ser-874–Thr-899. The segment covering Ala-887–Pro-897 has biased composition (polar residues). The region spanning Arg-932–Val-1211 is the Peptidase M14 3 domain. Asn-955, Asn-978, Asn-1070, and Asn-1142 each carry an N-linked (GlcNAc...) asparagine glycan. The helical transmembrane segment at Leu-1300–Trp-1320 threads the bilayer. S-palmitoyl cysteine attachment occurs at residues Cys-1317, Cys-1321, and Cys-1323. At Cys-1321 to His-1380 the chain is on the cytoplasmic side. Ser-1358 and Ser-1361 each carry phosphoserine. The interval Leu-1359 to His-1380 is disordered. A phosphothreonine mark is found at Thr-1368 and Thr-1370.

The protein belongs to the peptidase M14 family. The cofactor is Zn(2+). Highly expressed in placenta, pancreas and hepatoma cells. Lower levels found in skeletal muscle, heart and colon carcinoma and melanoma cell lines.

It is found in the cell membrane. The enzyme catalyses Releases C-terminal Arg and Lys from polypeptides.. This chain is Carboxypeptidase D (CPD), found in Homo sapiens (Human).